A 354-amino-acid polypeptide reads, in one-letter code: MSRVLSEVLAAVRPVDQSLFPVAKAHLDNLTKPRGSLGRLEELAARLFVIGGGAKPVVDPARIYVCAGDHGVAAEGVSLFPQEVTRQMVANFLAGGAGINVLAATAGIDLRVVDAGCLGDPFAPHPRFAGARVASGTANLAEAPAMTREQCESALLLGVSLAEAAAAEGVRALGTGDMGIANTTPSTALFCAYLGLSPAEITGPGTGLDAGGVGRKAAIVAKGLALHADVVAGGDPVAVLACLGGLEIACLAGLVIGAAACRLPIAVDGFISTAAYVAARAICPTVADYAVVSHASAEPGYAPIMAALGQKPLLDLGLRLGEGTGAALALFLMRSACNIYNDMATFASAGVSEG.

E322 serves as the catalytic Proton acceptor.

This sequence belongs to the CobT family.

It catalyses the reaction 5,6-dimethylbenzimidazole + nicotinate beta-D-ribonucleotide = alpha-ribazole 5'-phosphate + nicotinate + H(+). It participates in nucleoside biosynthesis; alpha-ribazole biosynthesis; alpha-ribazole from 5,6-dimethylbenzimidazole: step 1/2. Functionally, catalyzes the synthesis of alpha-ribazole-5'-phosphate from nicotinate mononucleotide (NAMN) and 5,6-dimethylbenzimidazole (DMB). This is Nicotinate-nucleotide--dimethylbenzimidazole phosphoribosyltransferase from Solidesulfovibrio magneticus (strain ATCC 700980 / DSM 13731 / RS-1) (Desulfovibrio magneticus).